Consider the following 250-residue polypeptide: NAD(P)H-quinone oxidoreductase subunit K (250 aa).

4 residues coordinate [4Fe-4S] cluster: C60, C61, C125, and C156. Positions 230–250 are disordered; that stretch reads ELNTSEIDASPASQPSSTYES. Residues 231-250 show a composition bias toward polar residues; sequence LNTSEIDASPASQPSSTYES.

Belongs to the complex I 20 kDa subunit family. In terms of assembly, NDH-1 can be composed of about 15 different subunits; different subcomplexes with different compositions have been identified which probably have different functions. [4Fe-4S] cluster serves as cofactor.

It is found in the cellular thylakoid membrane. The enzyme catalyses a plastoquinone + NADH + (n+1) H(+)(in) = a plastoquinol + NAD(+) + n H(+)(out). The catalysed reaction is a plastoquinone + NADPH + (n+1) H(+)(in) = a plastoquinol + NADP(+) + n H(+)(out). Its function is as follows. NDH-1 shuttles electrons from an unknown electron donor, via FMN and iron-sulfur (Fe-S) centers, to quinones in the respiratory and/or the photosynthetic chain. The immediate electron acceptor for the enzyme in this species is believed to be plastoquinone. Couples the redox reaction to proton translocation, and thus conserves the redox energy in a proton gradient. Cyanobacterial NDH-1 also plays a role in inorganic carbon-concentration. In Prochlorococcus marinus (strain MIT 9303), this protein is NAD(P)H-quinone oxidoreductase subunit K.